We begin with the raw amino-acid sequence, 182 residues long: Large ribosomal subunit protein uL6 (182 aa).

The protein belongs to the universal ribosomal protein uL6 family. In terms of assembly, part of the 50S ribosomal subunit.

In terms of biological role, this protein binds to the 23S rRNA, and is important in its secondary structure. It is located near the subunit interface in the base of the L7/L12 stalk, and near the tRNA binding site of the peptidyltransferase center. This is Large ribosomal subunit protein uL6 from Karelsulcia muelleri (strain GWSS) (Sulcia muelleri).